Reading from the N-terminus, the 211-residue chain is tRNA (pseudouridine(54)-N(1))-methyltransferase (211 aa).

Residues L128, G150, and C183 each contribute to the S-adenosyl-L-methionine site.

Belongs to the methyltransferase superfamily. TrmY family. In terms of assembly, homodimer.

It is found in the cytoplasm. The enzyme catalyses pseudouridine(54) in tRNA + S-adenosyl-L-methionine = N(1)-methylpseudouridine(54) in tRNA + S-adenosyl-L-homocysteine + H(+). In terms of biological role, specifically catalyzes the N1-methylation of pseudouridine at position 54 (Psi54) in tRNAs. The polypeptide is tRNA (pseudouridine(54)-N(1))-methyltransferase (Methanosarcina mazei (strain ATCC BAA-159 / DSM 3647 / Goe1 / Go1 / JCM 11833 / OCM 88) (Methanosarcina frisia)).